Here is a 126-residue protein sequence, read N- to C-terminus: Small ribosomal subunit protein bS6 (126 aa).

The tract at residues 101–126 (VMMKAKEERSAKREDAAPRAEEAAAE) is disordered. Over residues 104–126 (KAKEERSAKREDAAPRAEEAAAE) the composition is skewed to basic and acidic residues.

It belongs to the bacterial ribosomal protein bS6 family.

In terms of biological role, binds together with bS18 to 16S ribosomal RNA. The sequence is that of Small ribosomal subunit protein bS6 from Aliivibrio fischeri (strain ATCC 700601 / ES114) (Vibrio fischeri).